Here is a 336-residue protein sequence, read N- to C-terminus: Eukaryotic translation initiation factor 3 subunit H (336 aa).

In terms of domain architecture, MPN spans 21–154; that stretch reads VQCDGLAAMK…LKAYRLTPQA (134 aa).

Belongs to the eIF-3 subunit H family. As to quaternary structure, component of the eukaryotic translation initiation factor 3 (eIF-3) complex.

Its subcellular location is the cytoplasm. Functionally, component of the eukaryotic translation initiation factor 3 (eIF-3) complex, which is involved in protein synthesis of a specialized repertoire of mRNAs and, together with other initiation factors, stimulates binding of mRNA and methionyl-tRNAi to the 40S ribosome. The eIF-3 complex specifically targets and initiates translation of a subset of mRNAs involved in cell proliferation. This chain is Eukaryotic translation initiation factor 3 subunit H, found in Aedes aegypti (Yellowfever mosquito).